The primary structure comprises 436 residues: Adenine nucleotide transporter BT1, chloroplastic/amyloplastic/mitochondrial (436 aa).

The segment at 83 to 135 (ASLAPPFPGSRPPGRRGRGSEEEEAEGRRHEEAAAAGRSEPEEGQGQDRQPAP) is disordered. Solcar repeat units follow at residues 132–216 (QPAP…AKKF), 227–311 (IPIP…LKRL), and 324–412 (VGPV…CKKI). The next 6 membrane-spanning stretches (helical) occupy residues 137 to 158 (RLVS…LETI), 193 to 213 (AVNV…YDTA), 229 to 247 (IPTP…TLCT), 290 to 310 (SLIG…TLKR), 327 to 347 (VATL…TFPL), and 384 to 405 (LYRG…AFMC). Over residues 417–428 (EDEEEEDEAGGG) the composition is skewed to acidic residues. Residues 417-436 (EDEEEEDEAGGGEDDKKKVE) are disordered.

It belongs to the mitochondrial carrier (TC 2.A.29) family. Highly expressed in silks and endosperm of developing kernels. Expressed at intermediate levels in tassels and lower levels in stems and leaves.

It is found in the plastid. The protein localises to the chloroplast inner membrane. It localises to the amyloplast inner membrane. Its subcellular location is the mitochondrion inner membrane. With respect to regulation, inhibited by mersalyl. Functionally, probable adenylate translocator that mediates transport of ADP-glucose into endosperm storage plastids during starch synthesis. Transports cytosolic ADP-glucose to amyloplast stroma by counter-exchange with ADP. This Zea mays (Maize) protein is Adenine nucleotide transporter BT1, chloroplastic/amyloplastic/mitochondrial (BT1).